The chain runs to 474 residues: Aspartyl/glutamyl-tRNA(Asn/Gln) amidotransferase subunit B (474 aa).

This sequence belongs to the GatB/GatE family. GatB subfamily. In terms of assembly, heterotrimer of A, B and C subunits.

The enzyme catalyses L-glutamyl-tRNA(Gln) + L-glutamine + ATP + H2O = L-glutaminyl-tRNA(Gln) + L-glutamate + ADP + phosphate + H(+). The catalysed reaction is L-aspartyl-tRNA(Asn) + L-glutamine + ATP + H2O = L-asparaginyl-tRNA(Asn) + L-glutamate + ADP + phosphate + 2 H(+). Allows the formation of correctly charged Asn-tRNA(Asn) or Gln-tRNA(Gln) through the transamidation of misacylated Asp-tRNA(Asn) or Glu-tRNA(Gln) in organisms which lack either or both of asparaginyl-tRNA or glutaminyl-tRNA synthetases. The reaction takes place in the presence of glutamine and ATP through an activated phospho-Asp-tRNA(Asn) or phospho-Glu-tRNA(Gln). This chain is Aspartyl/glutamyl-tRNA(Asn/Gln) amidotransferase subunit B, found in Campylobacter curvus (strain 525.92).